The sequence spans 312 residues: UDP-N-acetylenolpyruvoylglucosamine reductase (312 aa).

The 167-residue stretch at 33-199 folds into the FAD-binding PCMH-type domain; the sequence is RVGGKAEWYC…TGATLQLLPG (167 aa). The active site involves arginine 178. Catalysis depends on serine 229, which acts as the Proton donor. Residue glutamate 299 is part of the active site.

Belongs to the MurB family. It depends on FAD as a cofactor.

It is found in the cytoplasm. The catalysed reaction is UDP-N-acetyl-alpha-D-muramate + NADP(+) = UDP-N-acetyl-3-O-(1-carboxyvinyl)-alpha-D-glucosamine + NADPH + H(+). The protein operates within cell wall biogenesis; peptidoglycan biosynthesis. In terms of biological role, cell wall formation. In Synechococcus sp. (strain JA-3-3Ab) (Cyanobacteria bacterium Yellowstone A-Prime), this protein is UDP-N-acetylenolpyruvoylglucosamine reductase.